The following is a 179-amino-acid chain: Large ribosomal subunit protein uL5 (179 aa).

Belongs to the universal ribosomal protein uL5 family. As to quaternary structure, part of the 50S ribosomal subunit; part of the 5S rRNA/L5/L18/L25 subcomplex. Contacts the 5S rRNA and the P site tRNA. Forms a bridge to the 30S subunit in the 70S ribosome.

Its function is as follows. This is one of the proteins that bind and probably mediate the attachment of the 5S RNA into the large ribosomal subunit, where it forms part of the central protuberance. In the 70S ribosome it contacts protein S13 of the 30S subunit (bridge B1b), connecting the 2 subunits; this bridge is implicated in subunit movement. Contacts the P site tRNA; the 5S rRNA and some of its associated proteins might help stabilize positioning of ribosome-bound tRNAs. The polypeptide is Large ribosomal subunit protein uL5 (Photobacterium profundum (strain SS9)).